A 529-amino-acid chain; its full sequence is AAA ATPase forming ring-shaped complexes (529 aa).

Residues 15-62 are a coiled coil; that stretch reads MERQDERLRSLSEANDRLMAKNHALAKALTRATQELTKAKAQLNQLAG. Residue 253–258 coordinates ATP; sequence GNGKTL.

It belongs to the AAA ATPase family. In terms of assembly, homohexamer. Assembles into a hexameric ring structure.

This Bifidobacterium dentium (strain ATCC 27534 / DSM 20436 / JCM 1195 / Bd1) protein is AAA ATPase forming ring-shaped complexes.